Here is a 415-residue protein sequence, read N- to C-terminus: Probable cytosolic iron-sulfur protein assembly protein 1 (415 aa).

The stretch at 9–48 (AHDDKVWSLSSHPTLPLLATASTDKCSNIYRLSCSNASSS) is one WD 1 repeat. The interval 45–70 (ASSSSSSSSPPSPPSPPSSSSPRRNF) is disordered. Residues 54–63 (PPSPPSPPSS) are compositionally biased toward pro residues. WD repeat units lie at residues 79-131 (THRR…DDNT), 160-200 (GHEN…EEFE), 207-246 (DHTQ…DEWS), 253-300 (GHEG…GFNG), 335-374 (IHTH…WEVE), and 380-415 (AHGV…IWEV).

The protein belongs to the WD repeat CIA1 family. Interacts with NAR1.

It is found in the cytoplasm. It localises to the nucleus. Essential component of the cytosolic iron-sulfur (Fe/S) protein assembly machinery. Required for the maturation of extramitochondrial Fe/S proteins. The polypeptide is Probable cytosolic iron-sulfur protein assembly protein 1 (Lodderomyces elongisporus (strain ATCC 11503 / CBS 2605 / JCM 1781 / NBRC 1676 / NRRL YB-4239) (Yeast)).